A 90-amino-acid polypeptide reads, in one-letter code: Mitochondrial import inner membrane translocase subunit Tim10 (90 aa).

Positions 29-54 (CHRKCVPPHYKEAELSKGESVCLDRC) match the Twin CX3C motif motif. 2 disulfides stabilise this stretch: C29-C54 and C33-C50.

It belongs to the small Tim family. Heterohexamer; composed of 3 copies of TIMM9 and 3 copies of TIMM10/TIM10A, named soluble 70 kDa complex. The complex forms a 6-bladed alpha-propeller structure and associates with the TIMM22 component of the TIM22 complex. Interacts with multi-pass transmembrane proteins in transit. Also forms a complex composed of TIMM9, TIMM10/TIM10A and FXC1/TIM10B.

The protein localises to the mitochondrion inner membrane. Its function is as follows. Mitochondrial intermembrane chaperone that participates in the import and insertion of multi-pass transmembrane proteins into the mitochondrial inner membrane. May also be required for the transfer of beta-barrel precursors from the TOM complex to the sorting and assembly machinery (SAM complex) of the outer membrane. Acts as a chaperone-like protein that protects the hydrophobic precursors from aggregation and guide them through the mitochondrial intermembrane space. The chain is Mitochondrial import inner membrane translocase subunit Tim10 (TIMM10) from Bos taurus (Bovine).